The sequence spans 158 residues: 3-hydroxyacyl-[acyl-carrier-protein] dehydratase FabZ (158 aa).

The active site involves histidine 61.

Belongs to the thioester dehydratase family. FabZ subfamily.

It is found in the cytoplasm. It carries out the reaction a (3R)-hydroxyacyl-[ACP] = a (2E)-enoyl-[ACP] + H2O. Its function is as follows. Involved in unsaturated fatty acids biosynthesis. Catalyzes the dehydration of short chain beta-hydroxyacyl-ACPs and long chain saturated and unsaturated beta-hydroxyacyl-ACPs. The protein is 3-hydroxyacyl-[acyl-carrier-protein] dehydratase FabZ of Methylobacterium radiotolerans (strain ATCC 27329 / DSM 1819 / JCM 2831 / NBRC 15690 / NCIMB 10815 / 0-1).